The following is a 329-amino-acid chain: Alpha-tubulin N-acetyltransferase 1 (329 aa).

Positions 5-185 constitute an N-acetyltransferase domain; sequence SQVALLPKLS…NNFVVFHRYF (181 aa). Acetyl-CoA is bound by residues 119–132 and 155–164; these read FFVDTSFQRKGFGK and SVKFLAFLQK. Disordered stretches follow at residues 218 to 261 and 306 to 329; these read PKYQ…GVGK and GARRRMSPTRSGVQYNIISGTPEH. Over residues 220–229 the composition is skewed to polar residues; that stretch reads YQSTTGPNNN. The segment covering 238-249 has biased composition (pro residues); sequence TPPPPPLPPPLV. The span at 313 to 329 shows a compositional bias: polar residues; that stretch reads PTRSGVQYNIISGTPEH.

This sequence belongs to the acetyltransferase ATAT1 family.

The enzyme catalyses L-lysyl-[alpha-tubulin] + acetyl-CoA = N(6)-acetyl-L-lysyl-[alpha-tubulin] + CoA + H(+). In terms of biological role, specifically acetylates 'Lys-40' in alpha-tubulin on the lumenal side of microtubules. Promotes microtubule destabilization and accelerates microtubule dynamics; this activity may be independent of acetylation activity. Acetylates alpha-tubulin with a slow enzymatic rate, due to a catalytic site that is not optimized for acetyl transfer. Enters the microtubule through each end and diffuses quickly throughout the lumen of microtubules. Acetylates only long/old microtubules because of its slow acetylation rate since it does not have time to act on dynamically unstable microtubules before the enzyme is released. This is Alpha-tubulin N-acetyltransferase 1 from Trypanosoma cruzi (strain CL Brener).